The following is a 601-amino-acid chain: Multidrug and toxin extrusion protein 2 (601 aa).

Over 1–62 (MNTAFAGFDE…PRGFWDEARA (62 aa)) the chain is Cytoplasmic. Residues 63–83 (LFVLSGPLFLFQVLNFLTYVV) traverse the membrane as a helical segment. Topologically, residues 84–95 (GTVFCGHLGKVE) are extracellular. A helical membrane pass occupies residues 96–116 (LASVTLGVAFVNVCGVSVGAG). The Cytoplasmic segment spans residues 117–145 (LSSACDTLMSQSFGSPNKKHVGVILQRGS). The chain crosses the membrane as a helical span at residues 146 to 166 (LILLLCCLPCWALFLNTQHIL). Residues 167-182 (LLFRQDPAVSRLTQDY) lie on the Extracellular side of the membrane. Residues 183–203 (AMIFIPGLPAIFLYSLLAKYL) traverse the membrane as a helical segment. The Cytoplasmic portion of the chain corresponds to 204-212 (QNQGIVWPQ). A helical transmembrane segment spans residues 213-233 (VLSGVVGNCVNGVANYALVSV). Residues 234 to 241 (LNLGVRGS) are Extracellular-facing. Residues 242–262 (AYANTISQFVQAAFLFLHIVL) form a helical membrane-spanning segment. The Cytoplasmic portion of the chain corresponds to 263–281 (KKLHLETWEGWSSQCLRDW). A helical transmembrane segment spans residues 282 to 301 (GPFLSLAIPSMLMMCVEWWA). Residues 302–320 (YEIGSFLMGLLGVVDLSGQ) lie on the Extracellular side of the membrane. A helical transmembrane segment spans residues 321–341 (AIIYEVATVVYMIPMGLGMAV). Topologically, residues 342-361 (CVRVGTALGAADTLQAKRSA) are cytoplasmic. The chain crosses the membrane as a helical span at residues 362–382 (VSGLLCTAGTSLVVGTLLGLL). The Extracellular portion of the chain corresponds to 383-402 (NSQLGYIFTSDEEVIALVNQ). A helical membrane pass occupies residues 403 to 423 (VLPIYIVFQLVEAVCCVFGGV). Topologically, residues 424–437 (LRGTGKQAFGAIVN) are cytoplasmic. A helical transmembrane segment spans residues 438–458 (AIMYYIVGLPLGIVLTFVVGM). Position 459 (R459) is a topological domain, extracellular. A helical membrane pass occupies residues 460–480 (IMGLWLGMLTCIFLAAVTFVV). Over 481-577 (YAVQLDWKLA…LSVRQLLFRR (97 aa)) the chain is Cytoplasmic. The chain crosses the membrane as a helical span at residues 578-598 (GAALAASVAVLMAGLLVRVLT). The Extracellular segment spans residues 599 to 601 (TGY).

The protein belongs to the multi antimicrobial extrusion (MATE) (TC 2.A.66.1) family. Expressed in renal cortical tissues.

It localises to the cell membrane. The protein resides in the apical cell membrane. The catalysed reaction is thiamine(out) + H(+)(in) = thiamine(in) + H(+)(out). The enzyme catalyses estrone 3-sulfate(in) + H(+)(out) = estrone 3-sulfate(out) + H(+)(in). It catalyses the reaction creatinine(in) + H(+)(out) = creatinine(out) + H(+)(in). Its function is as follows. Multidrug efflux pump that functions as a H(+)/organic cation antiporter. Mediates the efflux of cationic compounds, such as the model cations, tetraethylammonium (TEA) and 1-methyl-4-phenylpyridinium (MPP+), the platinum-based drug oxaliplatin or weak bases that are positively charged at physiological pH, cimetidine or the antidiabetic drug metformin. Mediates the efflux of the endogenous compounds creatinine, thiamine and estrone-3-sulfate. Plays a physiological role in the excretion of drugs, toxins and endogenous metabolites through the kidney. This chain is Multidrug and toxin extrusion protein 2 (SLC47A2), found in Oryctolagus cuniculus (Rabbit).